A 555-amino-acid chain; its full sequence is MPYPANVREIRAPRGTTLNTQSWLTEAPLRMLMNNLDPDVAERPEDLVVYGGIGRAARNWEAFDAIVAALKRLKEDETLLIQSGKPVGVFRTHADAPRVLLANSNLVPRWANWDHFNELDRKGLMMYGQMTAGSWIYIGAQGIVQGTYETFVEMGRQHHGGNLKGKWLLTAGLGGMGGAQPLASVMAGTACLAIECQPSSIEMRMRTGYLDAWTDDLEKALAMIDESCASGTPKSVGLLGNACEILPKILELGRLPDLLTDQTSAHDPVNGYLPEDWNVEDWKARRLSDPKAVEKAARASMAKHVRAMLEFQRRGVPTVDYGNNIRQVALDEGVADAFDFPGFVPAYIRPLFCRGIGPFRWAALSGDPEDIYRTDQKVKELIPDNPHLHTWLDMARERIKFQGLPARICWVGLGDRHRLGLAFNEMVASGELKAPVVIGRDHLDSGSVASPNRETEAMRDGSDAVSDWPLLNALLNCASGATWVSLHHGGGVGMGYSQHAGMVICCDGTEAAARRIERVLWNDPASGVMRHADAGYDIAIDSAREHGLDLPSLKG.

NAD(+) is bound by residues glycine 51–glycine 52, glutamine 129, glycine 175–glycine 177, glutamate 195, asparagine 241–alanine 242, glutamine 262–histidine 266, tyrosine 272–leucine 273, and tyrosine 321. Residue cysteine 409 is part of the active site. Glycine 491 is an NAD(+) binding site.

This sequence belongs to the urocanase family. Requires NAD(+) as cofactor.

The protein resides in the cytoplasm. It catalyses the reaction 4-imidazolone-5-propanoate = trans-urocanate + H2O. It functions in the pathway amino-acid degradation; L-histidine degradation into L-glutamate; N-formimidoyl-L-glutamate from L-histidine: step 2/3. Functionally, catalyzes the conversion of urocanate to 4-imidazolone-5-propionate. This Hyphomonas neptunium (strain ATCC 15444) protein is Urocanate hydratase.